Reading from the N-terminus, the 261-residue chain is Cytochrome c oxidase subunit 3 (261 aa).

The Mitochondrial matrix segment spans residues 1 to 15; the sequence is MTHQTHAYHMVNPSP. Residues 16-34 traverse the membrane as a helical segment; it reads WPLTGALSALLMTSGLIMW. Topologically, residues 35–40 are mitochondrial intermembrane; the sequence is FHFNSM. A helical transmembrane segment spans residues 41-66; that stretch reads YLLMLGLTTNTLTMYQWWRDIVREST. The Mitochondrial matrix segment spans residues 67 to 72; it reads FQGHHT. The helical transmembrane segment at 73–105 threads the bilayer; the sequence is PIVQKGLRYGMILFIVSEVFFFAGFFWAFYHSS. The Mitochondrial intermembrane segment spans residues 106 to 128; it reads LAPTPELGGCWPPTGITPLNPME. Residues 129 to 152 traverse the membrane as a helical segment; sequence VPLLNTSVLLASGVSITWAHHSLM. Residues 153-155 lie on the Mitochondrial matrix side of the membrane; the sequence is EGN. The helical transmembrane segment at 156–183 threads the bilayer; the sequence is RKHMLQALFITISLGIYFTLLQASEYYE. Topologically, residues 184–190 are mitochondrial intermembrane; the sequence is TPFTISD. A helical transmembrane segment spans residues 191–223; sequence GIYGSTFFMATGFHGLHVIIGSTFLIVCFVRQL. Over 224-232 the chain is Mitochondrial matrix; it reads KFHFTSNHH. Residues 233 to 256 traverse the membrane as a helical segment; it reads FGFEAAAWYWHFVDVVWLFLYVSI. Residues 257–261 are Mitochondrial intermembrane-facing; sequence YWWGS.

The protein belongs to the cytochrome c oxidase subunit 3 family. In terms of assembly, component of the cytochrome c oxidase (complex IV, CIV), a multisubunit enzyme composed of 14 subunits. The complex is composed of a catalytic core of 3 subunits MT-CO1, MT-CO2 and MT-CO3, encoded in the mitochondrial DNA, and 11 supernumerary subunits COX4I, COX5A, COX5B, COX6A, COX6B, COX6C, COX7A, COX7B, COX7C, COX8 and NDUFA4, which are encoded in the nuclear genome. The complex exists as a monomer or a dimer and forms supercomplexes (SCs) in the inner mitochondrial membrane with NADH-ubiquinone oxidoreductase (complex I, CI) and ubiquinol-cytochrome c oxidoreductase (cytochrome b-c1 complex, complex III, CIII), resulting in different assemblies (supercomplex SCI(1)III(2)IV(1) and megacomplex MCI(2)III(2)IV(2)).

The protein resides in the mitochondrion inner membrane. It catalyses the reaction 4 Fe(II)-[cytochrome c] + O2 + 8 H(+)(in) = 4 Fe(III)-[cytochrome c] + 2 H2O + 4 H(+)(out). Component of the cytochrome c oxidase, the last enzyme in the mitochondrial electron transport chain which drives oxidative phosphorylation. The respiratory chain contains 3 multisubunit complexes succinate dehydrogenase (complex II, CII), ubiquinol-cytochrome c oxidoreductase (cytochrome b-c1 complex, complex III, CIII) and cytochrome c oxidase (complex IV, CIV), that cooperate to transfer electrons derived from NADH and succinate to molecular oxygen, creating an electrochemical gradient over the inner membrane that drives transmembrane transport and the ATP synthase. Cytochrome c oxidase is the component of the respiratory chain that catalyzes the reduction of oxygen to water. Electrons originating from reduced cytochrome c in the intermembrane space (IMS) are transferred via the dinuclear copper A center (CU(A)) of subunit 2 and heme A of subunit 1 to the active site in subunit 1, a binuclear center (BNC) formed by heme A3 and copper B (CU(B)). The BNC reduces molecular oxygen to 2 water molecules using 4 electrons from cytochrome c in the IMS and 4 protons from the mitochondrial matrix. The polypeptide is Cytochrome c oxidase subunit 3 (MT-CO3) (Phoca vitulina (Harbor seal)).